Reading from the N-terminus, the 339-residue chain is Annexin A2 (339 aa).

Ser2 is subject to N-acetylserine. Positions 2-24 (STVHEILCKLSLEGDHSTPPSAY) are S100A10-binding site. At Tyr24 the chain carries Phosphotyrosine; by SRC. Ser26 is subject to Phosphoserine; by PKC. 2 Annexin repeats span residues 33–104 (FDAE…GLLK) and 105–176 (TPAQ…ALAK). An N6-acetyllysine; alternate modification is found at Lys49. A Glycyl lysine isopeptide (Lys-Gly) (interchain with G-Cter in SUMO1); alternate cross-link involves residue Lys49. Lys49 participates in a covalent cross-link: Glycyl lysine isopeptide (Lys-Gly) (interchain with G-Cter in SUMO2); alternate. Lys152 is modified (N6-acetyllysine). Residue Ser184 is modified to Phosphoserine. Annexin repeat units follow at residues 189–261 (ELID…NLVQ) and 265–336 (NKPL…YLCG). At Tyr199 the chain carries Phosphotyrosine. Lys227 is modified (N6-acetyllysine).

This sequence belongs to the annexin family. Heterotetramer containing 2 light chains of S100A10/p11 and 2 heavy chains of ANXA2/p36. Interacts with ATP1B1. Interacts with DYSF. Interacts with COCH. Interacts (via repeat Annexin 1) with PCSK9 (via the C-terminal domain); the interaction inhibits the degradation of LDLR. Interacts with CEACAM1 (via the cytoplasmic domain); this interaction is regulated by phosphorylation of CEACAM1. Interacts with APPL2 and APPL1; targets APPL2 to endosomes and acting in parallel to RAB5A. Interacts with S100A4. May interact with UBAP2. Interacts with PLEKHG4B; this interaction is required for PLEKHG4B localization to cell-cell adhesions. In terms of assembly, (Microbial infection) Interacts with human cytomegalovirus (HCMV). As to quaternary structure, (Microbial infection) Interacts with M.pneumoniae CARDS toxin; CARDS probably uses this protein as a receptor. A portion of internalized CARDS remains associated with intracellular annexin 2. In terms of processing, phosphorylation of Tyr-24 enhances heat stress-induced translocation to the cell surface. ISGylated.

The protein resides in the secreted. The protein localises to the extracellular space. It localises to the extracellular matrix. It is found in the basement membrane. Its subcellular location is the melanosome. In terms of biological role, calcium-regulated membrane-binding protein whose affinity for calcium is greatly enhanced by anionic phospholipids. It binds two calcium ions with high affinity. May be involved in heat-stress response. Inhibits PCSK9-enhanced LDLR degradation, probably reduces PCSK9 protein levels via a translational mechanism but also competes with LDLR for binding with PCSK9. Binds to endosomes damaged by phagocytosis of particulate wear debris and participates in endosomal membrane stabilization, thereby limiting NLRP3 inflammasome activation. Required for endothelial cell surface plasmin generation and may support fibrinolytic surveillance and neoangiogenesis. Its function is as follows. (Microbial infection) Binds M.pneumoniae CARDS toxin, probably serves as one receptor for this pathogen. When ANXA2 is down-regulated by siRNA, less toxin binds to human cells and less vacuolization (a symptom of M.pneumoniae infection) is seen. This chain is Annexin A2 (ANXA2), found in Homo sapiens (Human).